Here is a 497-residue protein sequence, read N- to C-terminus: MTSLLDKYLRNISGKGQQSLASVAYLAALDHLLHSFPSIGQSIVQELKSQRSRLKMIASENFSSLSVQLAMGNLLTDKYCEGSPFKRFYSCCENVDAIEWECVETAKELFGAESACVQPHSGADANLLAIMSIITQKIQSPAVQRLGYKTINDLPEQEYEALKAEMSQYKCLGPSLNSGGHLTHGTVRINVMSKLMHCLPYEVNLDTELFDYDVIAKIAKEHRPTVLIAGYSSYSRRLNFATLKQIAEDCGAVLWVDMAHFAGLVAGGVFIGEENPIPYADIVTTTTHKTLRGPRGGLVLAKKEYSDTLNKACPLMMGGPLPHVIAAKAVALKEAMTINFRKYAHQVVENARTLAEIFQRNGLRLLTGGTDNHMLIIDLTSLGVPGRIAEDMLTSVGIAVNRNSIPSDASGQWKTSGIRLGTPALTTLGMGSAEMEEVANIIAKVLRNITVRRNAEGSSSKSEGVLSEEIAQEARQRVADLLGRFPLYPEIDLETLV.

Residues leucine 176 and 180–182 each bind (6S)-5,6,7,8-tetrahydrofolate; that span reads GHL. At lysine 289 the chain carries N6-(pyridoxal phosphate)lysine.

This sequence belongs to the SHMT family. As to quaternary structure, homodimer. Pyridoxal 5'-phosphate is required as a cofactor.

It is found in the cytoplasm. The catalysed reaction is (6R)-5,10-methylene-5,6,7,8-tetrahydrofolate + glycine + H2O = (6S)-5,6,7,8-tetrahydrofolate + L-serine. It functions in the pathway one-carbon metabolism; tetrahydrofolate interconversion. Its pathway is amino-acid biosynthesis; glycine biosynthesis; glycine from L-serine: step 1/1. Catalyzes the reversible interconversion of serine and glycine with tetrahydrofolate (THF) serving as the one-carbon carrier. This reaction serves as the major source of one-carbon groups required for the biosynthesis of purines, thymidylate, methionine, and other important biomolecules. Also exhibits THF-independent aldolase activity toward beta-hydroxyamino acids, producing glycine and aldehydes, via a retro-aldol mechanism. This is Serine hydroxymethyltransferase from Chlamydia muridarum (strain MoPn / Nigg).